Reading from the N-terminus, the 720-residue chain is Connector enhancer of kinase suppressor of ras 1 (720 aa).

One can recognise an SAM domain in the interval 7 to 70 (WTPGKVATWL…LGGVEQLQAL (64 aa)). One can recognise a CRIC domain in the interval 78–164 (NLQSLTEGLL…QVLHEDGPAA (87 aa)). The 90-residue stretch at 196-285 (KAVLEQVQLD…GLSLVLKKIP (90 aa)) folds into the PDZ domain. Residues 285-390 (PIPETPPQTP…RKKSKGLATR (106 aa)) form a disordered region. Positions 304–317 (RSPSLSLAPLSPRA) are enriched in low complexity. Ser307 and Ser314 each carry phosphoserine. Residues 348 to 359 (EPLPIPPEPPAI) show a composition bias toward pro residues. Positions 379-390 (VGRKKSKGLATR) are enriched in basic residues. Residues 403 to 502 (RPDCDGWLLL…WVRHLITCIS (100 aa)) form the PH domain. Residues 504 to 573 (YQSPGRAPPP…TSFGSLTDSS (70 aa)) form a disordered region. The span at 518 to 530 (CYSETEAEDPDDE) shows a compositional bias: acidic residues. Low complexity predominate over residues 533 to 546 (SHSASPSPAQAGSP). The span at 553-571 (PAATPTQRSPRTSFGSLTD) shows a compositional bias: polar residues. Positions 615–646 (QLNERVHRVRALQSTLKAKLQELQVLEEVLGD) form a coiled coil. The disordered stretch occupies residues 676–720 (QAEGSSHILTSDSTEQSPHSLPSDPEEHSHLCPLTSESSLRPPDL). Residues 678-695 (EGSSHILTSDSTEQSPHS) show a composition bias toward polar residues.

The protein belongs to the CNKSR family. Interacts with RHO and RALGDS. In terms of processing, phosphorylated on tyrosine.

The protein resides in the cytoplasm. The protein localises to the membrane. May function as an adapter protein or regulator of Ras signaling pathways. This Homo sapiens (Human) protein is Connector enhancer of kinase suppressor of ras 1 (CNKSR1).